The primary structure comprises 79 residues: Hematopoietic cell signal transducer (79 aa).

Residues 1–18 (MIHPGHILFLLLLPVAAA) form the signal peptide. Over 19–34 (QTTPGSCSGCGSLSLP) the chain is Extracellular. The helical transmembrane segment at 35–55 (LLAGLVAADAVASPLIVGAVF) threads the bilayer. Residues 56-79 (LCARPRRSPAQGDGKVYINMPGRG) lie on the Cytoplasmic side of the membrane. Tyr-72 carries the post-translational modification Phosphotyrosine. A GRB2 binding site region spans residues 72 to 74 (YIN). The segment at 72-75 (YINM) is PIK3R1 binding site.

Belongs to the DAP10 family. As to quaternary structure, homodimer; Disulfide-linked. Heterohexamer composed of four subunits of HCST/DAP10 and two subunits of KLRK1. Interacts (via transmembrane domain) with KLRK1 (via transmembrane domain); the interaction is required for KLRK1 NK cell surface and induces NK cell-mediated cytotoxicity. Interacts with PIK3R1 and GRB2. Interacts with CLEC5A. Forms an CLEC5A/TYROBP/HCST trimolecular complex depending almost solely on TYROBP. Interacts with CD300H. Post-translationally, phosphorylated; PIK3R1 and GRB2 associate specifically with tyrosine-phosphorylated HCST. In terms of processing, O-glycosylated.

It is found in the membrane. Transmembrane adapter protein which associates with KLRK1 to form an activation receptor KLRK1-HCST in lymphoid and myeloid cells; this receptor plays a major role in triggering cytotoxicity against target cells expressing cell surface ligands such as MHC class I chain-related MICA and MICB, and UL16-binding proteins (ULBPs); these ligands are up-regulated by stress conditions and pathological state such as viral infection and tumor transformation. Functions as a docking site for PI3-kinase PIK3R1 and GRB2. Interaction of ULBPs with KLRK1-HCST triggers calcium mobilization and activation of the PIK3R1, MAP2K/ERK, and JAK2/STAT5 signaling pathways. Both PIK3R1 and GRB2 are required for full KLRK1-HCST-mediated activation and ultimate killing of target cells. In NK cells, KLRK1-HCST signaling directly induces cytotoxicity and enhances cytokine production initiated via DAP12/TYROBP-associated receptors. In T-cells, it provides primarily costimulation for TCR-induced signals. KLRK1-HCST receptor plays a role in immune surveillance against tumors and is required for cytolysis of tumors cells; indeed, melanoma cells that do not express KLRK1 ligands escape from immune surveillance mediated by NK cells. In Macaca mulatta (Rhesus macaque), this protein is Hematopoietic cell signal transducer (HCST).